Here is a 1404-residue protein sequence, read N- to C-terminus: DNA-directed RNA polymerase subunit beta' (1404 aa).

Residues Cys70, Cys72, Cys85, and Cys88 each coordinate Zn(2+). Residues Asp460, Asp462, and Asp464 each contribute to the Mg(2+) site. Zn(2+) is bound by residues Cys814, Cys888, Cys895, and Cys898.

The protein belongs to the RNA polymerase beta' chain family. The RNAP catalytic core consists of 2 alpha, 1 beta, 1 beta' and 1 omega subunit. When a sigma factor is associated with the core the holoenzyme is formed, which can initiate transcription. Mg(2+) is required as a cofactor. Zn(2+) serves as cofactor.

It catalyses the reaction RNA(n) + a ribonucleoside 5'-triphosphate = RNA(n+1) + diphosphate. Functionally, DNA-dependent RNA polymerase catalyzes the transcription of DNA into RNA using the four ribonucleoside triphosphates as substrates. The polypeptide is DNA-directed RNA polymerase subunit beta' (Shewanella loihica (strain ATCC BAA-1088 / PV-4)).